A 147-amino-acid chain; its full sequence is Large ribosomal subunit protein uL13 (147 aa).

Belongs to the universal ribosomal protein uL13 family. As to quaternary structure, part of the 50S ribosomal subunit.

In terms of biological role, this protein is one of the early assembly proteins of the 50S ribosomal subunit, although it is not seen to bind rRNA by itself. It is important during the early stages of 50S assembly. The chain is Large ribosomal subunit protein uL13 from Micrococcus luteus (strain ATCC 4698 / DSM 20030 / JCM 1464 / CCM 169 / CCUG 5858 / IAM 1056 / NBRC 3333 / NCIMB 9278 / NCTC 2665 / VKM Ac-2230) (Micrococcus lysodeikticus).